A 319-amino-acid chain; its full sequence is Oligopeptide transport ATP-binding protein OppF (319 aa).

Residues 5–255 form the ABC transporter domain; that stretch reads LNLKDLKVYY…PQHIYTKRLL (251 aa). 48–55 serves as a coordination point for ATP; the sequence is GESGSGKS.

The protein belongs to the ABC transporter superfamily. In terms of assembly, the complex is composed of two ATP-binding proteins (OppD and OppF), two transmembrane proteins (OppB and OppC) and a solute-binding protein (OppA).

The protein localises to the cell membrane. The enzyme catalyses a [peptide](out) + ATP + H2O = a [peptide](in) + ADP + phosphate + H(+). Its function is as follows. Part of the ABC transporter complex OppABCDF involved in the uptake of oligopeptides. Probably responsible for energy coupling to the transport system. Essential for uptake of peptides larger than three amino acids and for growth in milk. The chain is Oligopeptide transport ATP-binding protein OppF (oppF) from Lactococcus lactis subsp. lactis (strain IL1403) (Streptococcus lactis).